The chain runs to 210 residues: Protein-methionine-sulfoxide reductase heme-binding subunit MsrQ (210 aa).

6 consecutive transmembrane segments (helical) span residues 8 to 28 (LAVF…AWIF), 37 to 57 (VLVE…LSMT), 75 to 95 (LGLW…LFIL), 110 to 130 (PYII…VTSN), 147 to 167 (IIYV…RADL), and 169 to 189 (EWAL…PVFA).

The protein belongs to the MsrQ family. Heterodimer of a catalytic subunit (MsrP) and a heme-binding subunit (MsrQ). FMN serves as cofactor. The cofactor is heme b.

It localises to the cell inner membrane. Its function is as follows. Part of the MsrPQ system that repairs oxidized periplasmic proteins containing methionine sulfoxide residues (Met-O), using respiratory chain electrons. Thus protects these proteins from oxidative-stress damage caused by reactive species of oxygen and chlorine generated by the host defense mechanisms. MsrPQ is essential for the maintenance of envelope integrity under bleach stress, rescuing a wide series of structurally unrelated periplasmic proteins from methionine oxidation. MsrQ provides electrons for reduction to the reductase catalytic subunit MsrP, using the quinone pool of the respiratory chain. The polypeptide is Protein-methionine-sulfoxide reductase heme-binding subunit MsrQ (Pseudomonas syringae pv. syringae (strain B728a)).